The primary structure comprises 426 residues: Serine--tRNA ligase (426 aa).

T231–E233 contributes to the L-serine binding site. R262 to E264 contributes to the ATP binding site. L-serine is bound at residue E285. E349 to S352 serves as a coordination point for ATP. Residue S385 coordinates L-serine.

Belongs to the class-II aminoacyl-tRNA synthetase family. Type-1 seryl-tRNA synthetase subfamily. Homodimer. The tRNA molecule binds across the dimer.

The protein resides in the cytoplasm. It catalyses the reaction tRNA(Ser) + L-serine + ATP = L-seryl-tRNA(Ser) + AMP + diphosphate + H(+). The enzyme catalyses tRNA(Sec) + L-serine + ATP = L-seryl-tRNA(Sec) + AMP + diphosphate + H(+). It participates in aminoacyl-tRNA biosynthesis; selenocysteinyl-tRNA(Sec) biosynthesis; L-seryl-tRNA(Sec) from L-serine and tRNA(Sec): step 1/1. In terms of biological role, catalyzes the attachment of serine to tRNA(Ser). Is also able to aminoacylate tRNA(Sec) with serine, to form the misacylated tRNA L-seryl-tRNA(Sec), which will be further converted into selenocysteinyl-tRNA(Sec). This is Serine--tRNA ligase from Lysinibacillus sphaericus (strain C3-41).